Here is an 836-residue protein sequence, read N- to C-terminus: Protein O-mannosyl-transferase TMTC2 (836 aa).

A helical transmembrane segment spans residues 1–21 (MIAELVSSALGLALYLNTLSA). Residues 22-77 (DFCYDDSRAIKTNQDLLPETPWTHIFYNDFWGTLLTHSGSHKSYRPLCTLSFRLNH) are Extracellular-facing. A helical transmembrane segment spans residues 78–98 (AIGGLNPWSYHLVNVLLHAAV). The Cytoplasmic portion of the chain corresponds to 99–107 (TGLFTRFSK). Residues 108-128 (ALLGDGYWTFMAGLMFASHPI) form a helical membrane-spanning segment. The Extracellular segment spans residues 129-132 (HTEA). A helical membrane pass occupies residues 133 to 153 (VAGIVGRADVGASLFFLLSLL). At 154-168 (CYIKHCSTRGYSART) the chain is on the cytoplasmic side. The next 2 membrane-spanning stretches (helical) occupy residues 169-184 (WGWFLGTGLCAGCSML) and 185-204 (WKEQGVTVLAVSAVYDVFVF). At 205–220 (HRLKMKQILPTIYKRK) the chain is on the cytoplasmic side. The helical transmembrane segment at 221 to 241 (NLSLFLSISLLTFWGTCLLGA) threads the bilayer. Residues 242-312 (RLYWMGNKPP…KTVCDWRNLH (71 aa)) lie on the Extracellular side of the membrane. Residues 313 to 333 (TVAFYSGLLLLAYCGLKNPSL) form a helical membrane-spanning segment. Residues 334 to 392 (EGECNGKALTNGKQNANGHSCHSDVEYRNSEMKPSFASKVENGIKNCVPQRTQLPSTEN) lie on the Cytoplasmic side of the membrane. A helical membrane pass occupies residues 393–415 (IVILSLSLLIIPFIPATNLFFYV). The Extracellular segment spans residues 416 to 422 (GFVIAER). Residues 423 to 443 (VLYIPSMGFCLLITVGARALY) form a helical membrane-spanning segment. At 444–449 (VKVQKR) the chain is on the cytoplasmic side. A helical transmembrane segment spans residues 450–470 (FLKSLVFYATATLIVFYGVKT). Over 471–836 (AIRNGDWQNE…EKQGLKTSKT (366 aa)) the chain is Extracellular. TPR repeat units follow at residues 493 to 526 (AKAWGNLGNVLKSQSKISEAESAYRNALFYRSNM), 527 to 560 (ADMLYNLGLLLQENSRFAEALHYYKLAIGSRPTL), 561 to 594 (ASAYLNTGIILMNQGKTEEARRTFLKCSEIPDEN), 606 to 639 (TSCLYNLGKLYHEQGRYEEALSVYREAIQKMPRH), 643 to 676 (QSLYNMMGEAYMRLSKLPEAEHWYMESLRSKTDH), 677 to 710 (IPAHLTYGKLLALTGRKSEAEKFFLKAIELDPTK), 711 to 744 (GNCYMHYGQFLLEESRLTEAAEMAKKAAELDNTE), 745 to 778 (FDVVFNAAHMLRQASLNEAAEKYYDLAARLRPNY), and 779 to 812 (PAALMNLGAILHLNGRLQKAEANYLRALQLKPDD).

It belongs to the TMTC family.

Its subcellular location is the membrane. The protein localises to the endoplasmic reticulum. The enzyme catalyses a di-trans,poly-cis-dolichyl beta-D-mannosyl phosphate + L-seryl-[protein] = 3-O-(alpha-D-mannosyl)-L-seryl-[protein] + a di-trans,poly-cis-dolichyl phosphate + H(+). The catalysed reaction is a di-trans,poly-cis-dolichyl beta-D-mannosyl phosphate + L-threonyl-[protein] = 3-O-(alpha-D-mannosyl)-L-threonyl-[protein] + a di-trans,poly-cis-dolichyl phosphate + H(+). The protein operates within protein modification; protein glycosylation. In terms of biological role, transfers mannosyl residues to the hydroxyl group of serine or threonine residues. The 4 members of the TMTC family are O-mannosyl-transferases dedicated primarily to the cadherin superfamily, each member seems to have a distinct role in decorating the cadherin domains with O-linked mannose glycans at specific regions. Also acts as O-mannosyl-transferase on other proteins such as PDIA3. The chain is Protein O-mannosyl-transferase TMTC2 from Mus musculus (Mouse).